The primary structure comprises 244 residues: Ureidoacrylate amidohydrolase RutB (244 aa).

Catalysis depends on Asp38, which acts as the Proton acceptor. Lys147 is an active-site residue. Cys180 serves as the catalytic Nucleophile.

Belongs to the isochorismatase family. RutB subfamily.

It catalyses the reaction (Z)-3-ureidoacrylate + H2O + H(+) = (Z)-3-aminoacrylate + NH4(+) + CO2. The catalysed reaction is (Z)-3-ureidoacrylate + H2O = (Z)-3-aminoacrylate + carbamate + H(+). The enzyme catalyses (Z)-2-methylureidoacrylate + H2O + H(+) = (Z)-2-methylaminoacrylate + NH4(+) + CO2. Functionally, hydrolyzes ureidoacrylate to form aminoacrylate and carbamate. The carbamate hydrolyzes spontaneously, thereby releasing one of the nitrogen atoms of the pyrimidine ring as ammonia and one of its carbon atoms as CO2. This is Ureidoacrylate amidohydrolase RutB from Escherichia coli O1:K1 / APEC.